A 331-amino-acid polypeptide reads, in one-letter code: NADH-quinone oxidoreductase subunit H (331 aa).

Helical transmembrane passes span leucine 5–leucine 25, glycine 45–phenylalanine 65, phenylalanine 78–valine 98, valine 122–alanine 142, valine 156–valine 176, isoleucine 192–phenylalanine 212, phenylalanine 245–leucine 265, phenylalanine 271–phenylalanine 291, and tryptophan 311–isoleucine 331.

The protein belongs to the complex I subunit 1 family. In terms of assembly, NDH-1 is composed of 14 different subunits. Subunits NuoA, H, J, K, L, M, N constitute the membrane sector of the complex.

It is found in the cell inner membrane. It carries out the reaction a quinone + NADH + 5 H(+)(in) = a quinol + NAD(+) + 4 H(+)(out). Functionally, NDH-1 shuttles electrons from NADH, via FMN and iron-sulfur (Fe-S) centers, to quinones in the respiratory chain. The immediate electron acceptor for the enzyme in this species is believed to be ubiquinone. Couples the redox reaction to proton translocation (for every two electrons transferred, four hydrogen ions are translocated across the cytoplasmic membrane), and thus conserves the redox energy in a proton gradient. This subunit may bind ubiquinone. This chain is NADH-quinone oxidoreductase subunit H, found in Campylobacter concisus (strain 13826).